A 202-amino-acid chain; its full sequence is Twist-related protein 1 (202 aa).

Positions 1-18 are enriched in low complexity; sequence MMQDVSSSPVSPADDSLS. A disordered region spans residues 1 to 105; that stretch reads MMQDVSSSPV…GGGSPQSYEE (105 aa). A compositionally biased stretch (basic residues) spans 34-43; the sequence is RGGRKRRSSR. 2 stretches are compositionally biased toward gly residues: residues 46 to 65 and 80 to 99; these read AGGG…GGDE and GCGG…GGGS. In terms of domain architecture, bHLH spans 108–159; sequence TQRVMANVRERQRTQSLNEAFAALRKIIPTLPSDKLSKIQTLKLAARYIDFL. A sufficient for transactivation activity region spans residues 161-191; that stretch reads QVLQSDELDSKMASCSYVAHERLSYAFSVWR.

As to quaternary structure, efficient DNA binding requires dimerization with another bHLH protein. Homodimer or heterodimer with E proteins such as TCF3. ID1 binds preferentially to TCF3 but does not interact efficiently with TWIST1 so ID1 levels control the amount of TCF3 available to dimerize with TWIST1 and thus determine the type of dimer formed. Subset of mesodermal cells.

It localises to the nucleus. Functionally, acts as a transcriptional regulator. Inhibits myogenesis by sequestrating E proteins, inhibiting trans-activation by MEF2, and inhibiting DNA-binding by MYOD1 through physical interaction. This interaction probably involves the basic domains of both proteins. Also represses expression of pro-inflammatory cytokines such as TNFA and IL1B. Regulates cranial suture patterning and fusion. Activates transcription as a heterodimer with E proteins. Regulates gene expression differentially, depending on dimer composition. Homodimers induce expression of FGFR2 and POSTN while heterodimers repress FGFR2 and POSTN expression and induce THBS1 expression. Heterodimerization is also required for osteoblast differentiation. Represses the activity of the circadian transcriptional activator: NPAS2-BMAL1 heterodimer. This Homo sapiens (Human) protein is Twist-related protein 1 (TWIST1).